We begin with the raw amino-acid sequence, 413 residues long: Glutamyl-tRNA reductase (413 aa).

Substrate is bound by residues 57–60, serine 113, 118–120, and glutamine 124; these read TCNR and DFE. Cysteine 58 functions as the Nucleophile in the catalytic mechanism. Residue 193-198 coordinates NADP(+); that stretch reads GTGKIG.

It belongs to the glutamyl-tRNA reductase family. Homodimer.

The catalysed reaction is (S)-4-amino-5-oxopentanoate + tRNA(Glu) + NADP(+) = L-glutamyl-tRNA(Glu) + NADPH + H(+). The protein operates within porphyrin-containing compound metabolism; protoporphyrin-IX biosynthesis; 5-aminolevulinate from L-glutamyl-tRNA(Glu): step 1/2. In terms of biological role, catalyzes the NADPH-dependent reduction of glutamyl-tRNA(Glu) to glutamate 1-semialdehyde (GSA). The chain is Glutamyl-tRNA reductase from Flavobacterium psychrophilum (strain ATCC 49511 / DSM 21280 / CIP 103535 / JIP02/86).